The chain runs to 457 residues: MSGTRASNDRPPGTGGVKRGRLQQEAAATGSRVTVVLGAQWGDEGKGKVVDLLATDADIVSRCQGGNNAGHTVVVDGKEYDFHLLPSGIINTKAVSFIGNGVVIHLPGLFEEAEKNEKKGLKDWEKRLIISDRAHLVFDFHQAVDGLQEVQRQAQEGKNIGTTKKGIGPTYSSKAARTGLRICDLLSDFDEFSARFKNLAHQHQSMFPTLEIDVEGQLKRLKGFAERIRPMVRDGVYFMYEALHGPPKKVLVEGANAALLDIDFGTYPFVTSSNCTVGGVCTGLGIPPQNIGDVYGVVKAYTTRVGIGAFPTEQINEIGDLLQNRGHEWGVTTGRKRRCGWLDLMILRYAHMVNGFTALALTKLDILDVLSEIKVGISYKLNGKRIPYFPANQEILQKVEVEYETLPGWKADTTGARKWEDLPPQAQSYVRFVENHMGVAVKWVGVGKSRESMIQLF.

The disordered stretch occupies residues 1–24 (MSGTRASNDRPPGTGGVKRGRLQQ). GTP-binding positions include 42-48 (GDEGKGK) and 70-72 (GHT). The active-site Proton acceptor is D43. Residues D43 and G70 each coordinate Mg(2+). Position 43 (D43) interacts with substrate. IMP is bound by residues 43–46 (DEGK), 68–71 (NAGH), T163, R177, N256, T271, and R335. Residue H71 is the Proton donor of the active site. 331–337 (VTTGRKR) serves as a coordination point for substrate. Residues R337, 363-365 (KLD), and 445-448 (GVGK) each bind GTP.

Belongs to the adenylosuccinate synthetase family. In terms of assembly, homodimer. The cofactor is Mg(2+). In terms of tissue distribution, high levels in muscle.

The protein resides in the cytoplasm. Its subcellular location is the membrane. It catalyses the reaction IMP + L-aspartate + GTP = N(6)-(1,2-dicarboxyethyl)-AMP + GDP + phosphate + 2 H(+). The protein operates within purine metabolism; AMP biosynthesis via de novo pathway; AMP from IMP: step 1/2. With respect to regulation, weakly inhibited by AMP non-competitively to all substrates. Inhibited by IMP non-competitively with respect to GTP. Inhibited by fructose 1,6-bisphosphate competitively with respect to IMP. Functionally, component of the purine nucleotide cycle (PNC), which interconverts IMP and AMP to regulate the nucleotide levels in various tissues, and which contributes to glycolysis and ammoniagenesis. Catalyzes the first committed step in the biosynthesis of AMP from IMP. This Mus musculus (Mouse) protein is Adenylosuccinate synthetase isozyme 1 (Adss1).